A 1161-amino-acid chain; its full sequence is DNA-directed RNA polymerase subunit beta' (1161 aa).

Residues cysteine 60, cysteine 62, cysteine 75, and cysteine 78 each contribute to the Zn(2+) site. Residues aspartate 449, aspartate 451, and aspartate 453 each contribute to the Mg(2+) site. Zn(2+)-binding residues include cysteine 790, cysteine 864, cysteine 871, and cysteine 874.

It belongs to the RNA polymerase beta' chain family. In terms of assembly, the RNAP catalytic core consists of 2 alpha, 1 beta, 1 beta' and 1 omega subunit. When a sigma factor is associated with the core the holoenzyme is formed, which can initiate transcription. Mg(2+) serves as cofactor. Zn(2+) is required as a cofactor.

It catalyses the reaction RNA(n) + a ribonucleoside 5'-triphosphate = RNA(n+1) + diphosphate. In terms of biological role, DNA-dependent RNA polymerase catalyzes the transcription of DNA into RNA using the four ribonucleoside triphosphates as substrates. The sequence is that of DNA-directed RNA polymerase subunit beta' from Clostridioides difficile (strain 630) (Peptoclostridium difficile).